We begin with the raw amino-acid sequence, 142 residues long: Small heat shock protein IbpB (142 aa).

Residues 26–137 enclose the sHSP domain; it reads SGESQSFPPY…APQRIAINER (112 aa).

Belongs to the small heat shock protein (HSP20) family. As to quaternary structure, homodimer. Forms homomultimers of about 100-150 subunits at optimal growth temperatures. Conformation changes to oligomers at high temperatures or high ionic concentrations. The decrease in size of the multimers is accompanied by an increase in chaperone activity.

It is found in the cytoplasm. Its function is as follows. Associates with aggregated proteins, together with IbpA, to stabilize and protect them from irreversible denaturation and extensive proteolysis during heat shock and oxidative stress. Aggregated proteins bound to the IbpAB complex are more efficiently refolded and reactivated by the ATP-dependent chaperone systems ClpB and DnaK/DnaJ/GrpE. Its activity is ATP-independent. The protein is Small heat shock protein IbpB of Salmonella newport (strain SL254).